The primary structure comprises 298 residues: Phosphatidylglycerol--prolipoprotein diacylglyceryl transferase (298 aa).

7 helical membrane-spanning segments follow: residues 17 to 37, 59 to 79, 97 to 117, 129 to 149, 204 to 224, 230 to 250, and 257 to 277; these read LAVR…IVVG, MMFY…VLFY, GGMS…LFAW, FVAP…FING, SQLY…FLFA, MGAI…TVEF, and FLGL…PMIL. Arg-142 is a binding site for a 1,2-diacyl-sn-glycero-3-phospho-(1'-sn-glycerol).

The protein belongs to the Lgt family.

It is found in the cell inner membrane. The enzyme catalyses L-cysteinyl-[prolipoprotein] + a 1,2-diacyl-sn-glycero-3-phospho-(1'-sn-glycerol) = an S-1,2-diacyl-sn-glyceryl-L-cysteinyl-[prolipoprotein] + sn-glycerol 1-phosphate + H(+). It participates in protein modification; lipoprotein biosynthesis (diacylglyceryl transfer). Functionally, catalyzes the transfer of the diacylglyceryl group from phosphatidylglycerol to the sulfhydryl group of the N-terminal cysteine of a prolipoprotein, the first step in the formation of mature lipoproteins. The chain is Phosphatidylglycerol--prolipoprotein diacylglyceryl transferase from Burkholderia orbicola (strain MC0-3).